Here is a 364-residue protein sequence, read N- to C-terminus: Fructose-1,6-bisphosphatase class 1 2 (364 aa).

Mg(2+)-binding residues include Glu-101, Asp-123, Leu-125, and Asp-126. Residues 126-129 (DGSS) and Asn-218 each bind substrate. Residue Glu-290 participates in Mg(2+) binding.

This sequence belongs to the FBPase class 1 family. As to quaternary structure, homotetramer. Mg(2+) serves as cofactor.

The protein localises to the cytoplasm. It carries out the reaction beta-D-fructose 1,6-bisphosphate + H2O = beta-D-fructose 6-phosphate + phosphate. It participates in carbohydrate biosynthesis; gluconeogenesis. This chain is Fructose-1,6-bisphosphatase class 1 2, found in Cupriavidus taiwanensis (strain DSM 17343 / BCRC 17206 / CCUG 44338 / CIP 107171 / LMG 19424 / R1) (Ralstonia taiwanensis (strain LMG 19424)).